Consider the following 178-residue polypeptide: MHSSALLCYLVFLAGVGASRDRGTQSENSCTHFPTSLPHMLHELRAAFSRVKTFFQMKDQLDNMLLNGSLLEDFKGYLGCQALSEMIQFYLEEVMPQAENHGPDIKEHVNSLGEKLKTLRVRLRRCHRFLPCENKSKAVEQVKSAFSKLQEKGVYKAMSEFDIFINYIEAYMTTKMKN.

A signal peptide spans 1–18 (MHSSALLCYLVFLAGVGA). 2 cysteine pairs are disulfide-bonded: Cys30–Cys126 and Cys80–Cys132. Residue Asn67 is glycosylated (N-linked (GlcNAc...) asparagine). A glycan (N-linked (GlcNAc...) asparagine) is linked at Asn134.

This sequence belongs to the IL-10 family. In terms of assembly, homodimer. Interacts with IL10RA and IL10RB.

The protein resides in the secreted. Functionally, major immune regulatory cytokine that acts on many cells of the immune system where it has profound anti-inflammatory functions, limiting excessive tissue disruption caused by inflammation. Mechanistically, IL10 binds to its heterotetrameric receptor comprising IL10RA and IL10RB leading to JAK1 and STAT2-mediated phosphorylation of STAT3. In turn, STAT3 translocates to the nucleus where it drives expression of anti-inflammatory mediators. Targets antigen-presenting cells (APCs) such as macrophages and monocytes and inhibits their release of pro-inflammatory cytokines including granulocyte-macrophage colony-stimulating factor /GM-CSF, granulocyte colony-stimulating factor/G-CSF, IL-1 alpha, IL-1 beta, IL-6, IL-8 and TNF-alpha. Also interferes with antigen presentation by reducing the expression of MHC-class II and co-stimulatory molecules, thereby inhibiting their ability to induce T cell activation. In addition, controls the inflammatory response of macrophages by reprogramming essential metabolic pathways including mTOR signaling. The sequence is that of Interleukin-10 (IL10) from Equus caballus (Horse).